We begin with the raw amino-acid sequence, 117 residues long: UPF0342 protein BcerKBAB4_0767 (117 aa).

This sequence belongs to the UPF0342 family.

The polypeptide is UPF0342 protein BcerKBAB4_0767 (Bacillus mycoides (strain KBAB4) (Bacillus weihenstephanensis)).